Consider the following 926-residue polypeptide: Alanine--tRNA ligase (926 aa).

Zn(2+) is bound by residues His-611, His-615, Cys-714, and His-718.

The protein belongs to the class-II aminoacyl-tRNA synthetase family. Zn(2+) serves as cofactor.

It is found in the cytoplasm. The enzyme catalyses tRNA(Ala) + L-alanine + ATP = L-alanyl-tRNA(Ala) + AMP + diphosphate. Functionally, catalyzes the attachment of alanine to tRNA(Ala) in a two-step reaction: alanine is first activated by ATP to form Ala-AMP and then transferred to the acceptor end of tRNA(Ala). Also edits incorrectly charged Ser-tRNA(Ala) and Gly-tRNA(Ala) via its editing domain. This is Alanine--tRNA ligase from Methanosarcina mazei (strain ATCC BAA-159 / DSM 3647 / Goe1 / Go1 / JCM 11833 / OCM 88) (Methanosarcina frisia).